The following is a 345-amino-acid chain: UDP-3-O-acylglucosamine N-acyltransferase (345 aa).

The active-site Proton acceptor is the His248.

The protein belongs to the transferase hexapeptide repeat family. LpxD subfamily. In terms of assembly, homotrimer.

It catalyses the reaction a UDP-3-O-[(3R)-3-hydroxyacyl]-alpha-D-glucosamine + a (3R)-hydroxyacyl-[ACP] = a UDP-2-N,3-O-bis[(3R)-3-hydroxyacyl]-alpha-D-glucosamine + holo-[ACP] + H(+). It functions in the pathway bacterial outer membrane biogenesis; LPS lipid A biosynthesis. Functionally, catalyzes the N-acylation of UDP-3-O-acylglucosamine using 3-hydroxyacyl-ACP as the acyl donor. Is involved in the biosynthesis of lipid A, a phosphorylated glycolipid that anchors the lipopolysaccharide to the outer membrane of the cell. This chain is UDP-3-O-acylglucosamine N-acyltransferase, found in Trichodesmium erythraeum (strain IMS101).